A 124-amino-acid chain; its full sequence is Small ribosomal subunit protein uS12c (124 aa).

Belongs to the universal ribosomal protein uS12 family. As to quaternary structure, part of the 30S ribosomal subunit.

It localises to the plastid. It is found in the chloroplast. With S4 and S5 plays an important role in translational accuracy. Located at the interface of the 30S and 50S subunits. In Ostreococcus tauri, this protein is Small ribosomal subunit protein uS12c (rps12).